The sequence spans 79 residues: Putative defensin-like protein 309 (79 aa).

An N-terminal signal peptide occupies residues 1–19; the sequence is MKILAFFIFVLLIFSCSSS. 3 disulfides stabilise this stretch: cysteine 31–cysteine 50, cysteine 37–cysteine 55, and cysteine 41–cysteine 57.

It belongs to the DEFL family.

It is found in the secreted. The polypeptide is Putative defensin-like protein 309 (Arabidopsis thaliana (Mouse-ear cress)).